The sequence spans 130 residues: METNRQKKIGGVIQKDLVDILQGEIRKNGISNLVISVSKVSVTTDLGVARVYLSVFPQEKAPEILESIKSNMYLIKHDLSQRVRLQLRKVPNLAFYIDDSLDYIEKIDNALAGKENPIENRDLLEKRKKI.

It belongs to the RbfA family. As to quaternary structure, monomer. Binds 30S ribosomal subunits, but not 50S ribosomal subunits or 70S ribosomes.

The protein resides in the cytoplasm. One of several proteins that assist in the late maturation steps of the functional core of the 30S ribosomal subunit. Associates with free 30S ribosomal subunits (but not with 30S subunits that are part of 70S ribosomes or polysomes). Required for efficient processing of 16S rRNA. May interact with the 5'-terminal helix region of 16S rRNA. This Flavobacterium psychrophilum (strain ATCC 49511 / DSM 21280 / CIP 103535 / JIP02/86) protein is Ribosome-binding factor A.